A 295-amino-acid chain; its full sequence is 5'-adenylylsulfate reductase-like 6 (295 aa).

Residues 1–22 form the signal peptide; the sequence is MEKKLTLLLLVVVVLFVNLTNA. The Thioredoxin domain occupies 23–161; sequence TVRVQICPRE…LVAFYTDVTG (139 aa). A glycan (N-linked (GlcNAc...) asparagine) is linked at Asn136. The helical transmembrane segment at 208–228 threads the bilayer; that stretch reads ATVFVLLRLLHLISPTMVVFV.

Its subcellular location is the membrane. In Arabidopsis thaliana (Mouse-ear cress), this protein is 5'-adenylylsulfate reductase-like 6 (APRL6).